A 166-amino-acid chain; its full sequence is Gem-associated protein 6 (166 aa).

Residues 4 to 73 (WMKKSPLEWE…VQTVETISEG (70 aa)) form the Sm domain. Residues 68-166 (ETISEGDHRV…LIQGHLSASQ (99 aa)) enclose the AD domain. Phosphoserine is present on residues serine 94 and serine 165.

As to quaternary structure, part of the core SMN complex that contains SMN1, GEMIN2/SIP1, DDX20/GEMIN3, GEMIN4, GEMIN5, GEMIN6, GEMIN7, GEMIN8 and STRAP/UNRIP. Part of the SMN-Sm complex that contains SMN1, GEMIN2/SIP1, DDX20/GEMIN3, GEMIN4, GEMIN5, GEMIN6, GEMIN7, GEMIN8, STRAP/UNRIP and the Sm proteins SNRPB, SNRPD1, SNRPD2, SNRPD3, SNRPE, SNRPF and SNRPG. Interacts with GEMIN7; the interaction is direct. Interacts with GEMIN8; the interaction is direct. Interacts with SNRPB, SNRPD2, SNRPD3 and SNRPE; the interaction is direct.

It is found in the nucleus. Its subcellular location is the nucleoplasm. The protein resides in the gem. It localises to the cytoplasm. In terms of biological role, the SMN complex catalyzes the assembly of small nuclear ribonucleoproteins (snRNPs), the building blocks of the spliceosome, and thereby plays an important role in the splicing of cellular pre-mRNAs. Most spliceosomal snRNPs contain a common set of Sm proteins SNRPB, SNRPD1, SNRPD2, SNRPD3, SNRPE, SNRPF and SNRPG that assemble in a heptameric protein ring on the Sm site of the small nuclear RNA to form the core snRNP (Sm core). In the cytosol, the Sm proteins SNRPD1, SNRPD2, SNRPE, SNRPF and SNRPG are trapped in an inactive 6S pICln-Sm complex by the chaperone CLNS1A that controls the assembly of the core snRNP. To assemble core snRNPs, the SMN complex accepts the trapped 5Sm proteins from CLNS1A forming an intermediate. Binding of snRNA inside 5Sm triggers eviction of the SMN complex, thereby allowing binding of SNRPD3 and SNRPB to complete assembly of the core snRNP. The sequence is that of Gem-associated protein 6 (Gemin6) from Mus musculus (Mouse).